Consider the following 320-residue polypeptide: Cytochrome c biogenesis protein CcsA (320 aa).

The next 8 membrane-spanning stretches (helical) occupy residues 9–29 (ILAHISFSLILVVTLIYWGTL), 36–56 (LSSSGGKGMIVTFLCTTGLLI), 70–90 (LYESFMFLSWSSSVFHILLEV), 97–117 (WLGAITAPSAMLTHGFATLGL), 143–163 (ILFSYATLLCGSLASIALLVI), 227–247 (AIGLGFSLSTIGTLSGAIWAN), 254–274 (WSWDPKETWALITWTIFAIYL), and 288–308 (AIVASLGFFIVWIRYLGVNLL).

Belongs to the CcmF/CycK/Ccl1/NrfE/CcsA family. In terms of assembly, may interact with Ccs1.

Its subcellular location is the plastid. It is found in the chloroplast thylakoid membrane. Its function is as follows. Required during biogenesis of c-type cytochromes (cytochrome c6 and cytochrome f) at the step of heme attachment. The chain is Cytochrome c biogenesis protein CcsA from Pinus thunbergii (Japanese black pine).